The sequence spans 211 residues: Pyridoxine/pyridoxamine 5'-phosphate oxidase (211 aa).

Substrate-binding positions include 7 to 10 (RREY) and Lys65. Residues 60–65 (RIVLLK), 75–76 (FT), Lys82, and Gln104 each bind FMN. 3 residues coordinate substrate: Tyr122, Arg126, and Ser130. FMN is bound by residues 139 to 140 (QS) and Trp184. 190–192 (RLH) is a substrate binding site. Arg194 is a binding site for FMN.

Belongs to the pyridoxamine 5'-phosphate oxidase family. As to quaternary structure, homodimer. It depends on FMN as a cofactor.

It carries out the reaction pyridoxamine 5'-phosphate + O2 + H2O = pyridoxal 5'-phosphate + H2O2 + NH4(+). It catalyses the reaction pyridoxine 5'-phosphate + O2 = pyridoxal 5'-phosphate + H2O2. Its pathway is cofactor metabolism; pyridoxal 5'-phosphate salvage; pyridoxal 5'-phosphate from pyridoxamine 5'-phosphate: step 1/1. It functions in the pathway cofactor metabolism; pyridoxal 5'-phosphate salvage; pyridoxal 5'-phosphate from pyridoxine 5'-phosphate: step 1/1. Functionally, catalyzes the oxidation of either pyridoxine 5'-phosphate (PNP) or pyridoxamine 5'-phosphate (PMP) into pyridoxal 5'-phosphate (PLP). This is Pyridoxine/pyridoxamine 5'-phosphate oxidase from Teredinibacter turnerae (strain ATCC 39867 / T7901).